A 280-amino-acid chain; its full sequence is MCSAFHRAESGTELLARLEGRSSLKEIEPNLFADEDSPVHGDILEFHGPEGTGKTEMLYHLTARCILPKSEGGLEVEVLFIDTDYHFDMLRLVTILEHRLSQSSEEIIKYCLGRFFLVYCSSSTHLLLTLYSLESMFCSHPSLCLLILDSLSAFYWIDRVNGGESVNLQESTLRKCSQCLEKLVNDYRLVLFATTQTIMQKASSSSEEPSHASRRLCDVDIDYRPYLCKAWQQLVKHRMFFSKQDDSQSSNQFSLVSRCLKSNSLKKHFFIIGESGVEFC.

Ser-10 carries the phosphoserine modification.

It belongs to the RecA family. RAD51 subfamily. Interacts with RAD51D. Part of the BCDX2 complex consisting of RAD51B, RAD51C, RAD51D and XRCC2; the complex has a ring-like structure arranged into a flat disk around a central channel. In the absence of DNA, the BCDX2 subcomplex XRCC2:RAD51D formed a multimeric ring structure; in the presence of single-stranded DNA it formed a filamentous structure with the ssDNA.

Its subcellular location is the nucleus. It localises to the cytoplasm. The protein resides in the cytoskeleton. It is found in the microtubule organizing center. The protein localises to the centrosome. In terms of biological role, involved in the homologous recombination repair (HRR) pathway of double-stranded DNA, thought to repair chromosomal fragmentation, translocations and deletions. Part of the RAD51 paralog protein complex BCDX2 which acts in the BRCA1-BRCA2-dependent HR pathway. Upon DNA damage, BCDX2 acts downstream of BRCA2 recruitment and upstream of RAD51 recruitment. BCDX2 binds predominantly to the intersection of the four duplex arms of the Holliday junction and to junction of replication forks. The BCDX2 complex was originally reported to bind single-stranded DNA, single-stranded gaps in duplex DNA and specifically to nicks in duplex DNA. This is DNA repair protein XRCC2 (XRCC2) from Homo sapiens (Human).